Here is a 1092-residue protein sequence, read N- to C-terminus: Elongation factor 3 (1092 aa).

Val92 provides a ligand contact to ADP. HEAT repeat units follow at residues 95 to 133 (MVKT…SPVS), 138 to 175 (PYMI…RLTP), 177 to 214 (ATKQ…TAPR), 218 to 255 (TAVP…LINN), 257 to 293 (DIEK…EVLP), 294 to 331 (PTLA…LVEK), and 333 to 370 (QIIA…KILT). Residue Glu454 participates in ADP binding. ABC transporter domains lie at 486-704 (EELC…YYEL) and 730-1044 (LKVQ…DKNK). ADP contacts are provided by Asn766, Glu973, Asn976, and His1002. Disordered stretches follow at residues 1023–1044 (TPTG…DKNK) and 1063–1092 (SKLS…DDDE). Over residues 1063–1075 (SKLSGKDLRKKRK) the composition is skewed to basic residues. The span at 1076 to 1086 (EREARRKRGEE) shows a compositional bias: basic and acidic residues.

Belongs to the ABC transporter superfamily. ABCF family. EF3 subfamily.

Its subcellular location is the cytoplasm. The protein localises to the cytosol. The enzyme catalyses ATP + H2O = ADP + phosphate + H(+). Its pathway is protein biosynthesis; polypeptide chain elongation. Functionally, ribosome-dependent ATPase that functions in cytoplasmic translation elongation. Required for the ATP-dependent release of deacylated tRNA from the ribosomal E-site during protein biosynthesis. Stimulates the eEF1A-dependent binding of aminoacyl-tRNA to the ribosomal A-site, which has reduced affinity for tRNA as long as the E-site is occupied. Assists translation termination by stimulating the release of nascent protein from the ribosome by release factors. The chain is Elongation factor 3 from Gonapodya prolifera (strain JEL478) (Monoblepharis prolifera).